Here is a 476-residue protein sequence, read N- to C-terminus: Variant surface glycoprotein MITAT 1.2 (476 aa).

An N-terminal signal peptide occupies residues 1–26 (MPSNQEARLFLAVLVLAQVLPILVDS). 2 disulfide bridges follow: cysteine 41–cysteine 171 and cysteine 149–cysteine 213. Residue asparagine 289 is glycosylated (N-linked (GlcNAc...) asparagine). Disordered regions lie at residues 389 to 418 (QKHK…CKSP) and 435 to 459 (EEAK…TGSS). Cystine bridges form between cysteine 407-cysteine 419 and cysteine 415-cysteine 430. Basic and acidic residues predominate over residues 435–449 (EEAKKVADETAKDGK). A compositionally biased stretch (low complexity) spans 450-459 (TGNTNTTGSS). Residue asparagine 454 is glycosylated (N-linked (GlcNAc...) asparagine). A lipid anchor (GPI-anchor amidated serine) is attached at serine 459. Residues 460–476 (NSFVISKTPLWLAVLLF) constitute a propeptide, removed in mature form.

Homodimer.

The protein localises to the cell membrane. In terms of biological role, VSG forms a coat on the surface of the parasite. The trypanosome evades the immune response of the host by expressing a series of antigenically distinct VSGs from an estimated 1000 VSG genes. The chain is Variant surface glycoprotein MITAT 1.2 from Trypanosoma brucei brucei.